We begin with the raw amino-acid sequence, 963 residues long: Aminopeptidase N (963 aa).

Residues 2–8 (AKGFYIS) lie on the Cytoplasmic side of the membrane. The helical; Signal-anchor for type II membrane protein transmembrane segment at 9–32 (KALGILGILLGVAAVATIIALSVV) threads the bilayer. Residues 33–64 (YAQEKNKNAEHVPQAPTSPTITTTAAITLDQS) form a cytosolic Ser/Thr-rich junction region. Residues 33–963 (YAQEKNKNAE…VVLNWFIEHS (931 aa)) lie on the Extracellular side of the membrane. The interval 65-963 (KPWNRYRLPT…VVLNWFIEHS (899 aa)) is metalloprotease. N-linked (GlcNAc...) asparagine glycosylation is found at N82 and N124. Y171 carries the sulfotyrosine modification. N-linked (GlcNAc...) asparagine glycans are attached at residues N229, N237, N258, N286, N314, and N328. Position 347–351 (347–351 (GAMEN)) interacts with substrate. H383 serves as a coordination point for Zn(2+). The Proton acceptor role is filled by E384. Residues H387 and E406 each coordinate Zn(2+). 6 N-linked (GlcNAc...) asparagine glycosylation sites follow: N506, N556, N569, N622, N646, and N736. The interaction with TGEV spike glycoprotein stretch occupies residues 717-813 (KYLRKQVEPL…DQWDFAWGQL (97 aa)). Intrachain disulfides connect C758/C765 and C795/C831.

Belongs to the peptidase M1 family. Homodimer. Interacts with SLC6A19. In terms of assembly, (Microbial infection) Interacts with TGEV and PRCoV spike glycoprotein. The cofactor is Zn(2+). Sulfated. Post-translationally, N- and O-glycosylated. In terms of processing, may undergo proteolysis and give rise to a soluble form.

The protein localises to the cell membrane. The enzyme catalyses Release of an N-terminal amino acid, Xaa-|-Yaa- from a peptide, amide or arylamide. Xaa is preferably Ala, but may be most amino acids including Pro (slow action). When a terminal hydrophobic residue is followed by a prolyl residue, the two may be released as an intact Xaa-Pro dipeptide.. Broad specificity aminopeptidase which plays a role in the final digestion of peptides generated from hydrolysis of proteins by gastric and pancreatic proteases. Also involved in the processing of various peptides including peptide hormones, such as angiotensin III and IV, neuropeptides, and chemokines. May also be involved the cleavage of peptides bound to major histocompatibility complex class II molecules of antigen presenting cells. May have a role in angiogenesis and promote cholesterol crystallization. It is able to degrade Leu-enkephalin and Met-enkephalin but not cholecystokinin CCK8, neuromedin C (GRP-10), somatostatin-14, substance P and vasoactive intestinal peptide. May have a role in amino acid transport by acting as binding partner of amino acid transporter SLC6A19 and regulating its activity. Its function is as follows. (Microbial infection) In case of porcine transmissible gastroenteritis coronavirus (TGEV) and porcine respiratory coronavirus (PRCoV) infections, serves as a receptor for TGEV and PRCoV spike glycoprotein in a species-specific manner. The chain is Aminopeptidase N (ANPEP) from Sus scrofa (Pig).